A 1410-amino-acid polypeptide reads, in one-letter code: Ribosome-binding protein 1 (1410 aa).

The Lumenal segment spans residues 1 to 7 (MDIYDTQ). Residues 8–28 (TLGVVVFGGFMVVSAIGIFLV) form a helical membrane-spanning segment. The Cytoplasmic segment spans residues 29-1410 (STFSMKETSY…GSSSKEGTSV (1382 aa)). Disordered stretches follow at residues 44–90 (NQRK…DPAP) and 129–152 (QEKL…VEPA). Basic residues predominate over residues 52–63 (THHQKVEKKKKE). Over residues 64–88 (KTVEKKGKTKKKEEKPNGKIPDHDP) the composition is skewed to basic and acidic residues. K148 is covalently cross-linked (Glycyl lysine isopeptide (Lys-Gly) (interchain with G-Cter in SUMO2)). Phosphoserine is present on residues S159 and S165. 2 disordered regions span residues 173–648 (APKE…PLYL) and 895–925 (QSSH…LQSS). Composition is skewed to polar residues over residues 191 to 209 (TPAT…QNQS) and 225 to 238 (TPNQ…TPNQ). 33 consecutive repeat copies span residues 197–206 (TQGKKAEGTQ), 207–216 (NQSKKAEGAP), 217–226 (NQGRKAEGTP), 227–236 (NQGKKTEGTP), 237–246 (NQGKKAEGTP), 247–256 (NQGKKAEGTP), 257–266 (NQGKKAEGAQ), 267–276 (NQGKKVDTTP), 277–286 (NQGKKVEGAP), 287–296 (TQGRKAEGAQ), 297–306 (NQAKKVEGAQ), 307–316 (NQGKKAEGAQ), 317–326 (NQGKKGEGAQ), 327–336 (NQGKKAEGAQ), 337–346 (NQGKKAEGAQ), 347–356 (NQGKKAEGAQ), 357–366 (NQGKKAEGAQ), 367–376 (NQGKKAEGAQ), 377–386 (NQGKKAEGAQ), 387–396 (NQGKKVEGAQ), 397–406 (NQGKKAEGAQ), 407–416 (NQGKKAEGAQ), 417–426 (NQGKKAEGAQ), 427–436 (NQGKKAEGAQ), 437–446 (NQGKKAEGAQ), 447–456 (NQGKKAEGAQ), 457–466 (NQGKKAEGAQ), 467–476 (NQGKKVEGAQ), 477–486 (NQGKKAEGAQ), 487–496 (NQGKKAEGAQ), 497–506 (NQGKKAEGAQ), 507–516 (NQGQKGEGAQ), and 517–526 (NQGKKTEGAQ). The interval 197–604 (TQGKKAEGTQ…NQGKKTESAS (408 aa)) is 41 X 10 AA approximate tandem repeats of [TN]-Q-[GSA]-[KRQT]-K-[ATGSV]-[ED]-[GTAS]-[ATIS]-[PQTAS]. Phosphothreonine occurs at positions 225, 235, 245, and 255. 2 stretches are compositionally biased toward polar residues: residues 265 to 278 (AQNQ…TPNQ) and 295 to 519 (AQNQ…QNQG). Residues 520-532 (KKTEGAQGKKAER) are compositionally biased toward basic and acidic residues. The 34; approximate repeat unit spans residues 527–534 (GKKAERSP). S533 carries the phosphoserine modification. Residues 535 to 544 (NQGKKGEGAP) form repeat 35. A 36; approximate repeat occupies 545-554 (IQGKKADSVA). Positions 553-567 (VANQGTKVEGITNQG) are enriched in polar residues. Tandem repeats lie at residues 555–564 (NQGTKVEGIT) and 565–574 (NQGKKAEGSP). Over residues 568 to 581 (KKAEGSPSEGKKAE) the composition is skewed to basic and acidic residues. A phosphoserine mark is found at S573 and S583. One copy of the 39; approximate repeat lies at 575-584 (SEGKKAEGSP). 2 tandem repeats follow at residues 585-594 (NQGKKADAAA) and 595-604 (NQGKKTESAS). Positions 602-612 (SASVQGRNTDV) are enriched in polar residues. Phosphoserine is present on S615. K620 participates in a covalent cross-link: Glycyl lysine isopeptide (Lys-Gly) (interchain with G-Cter in SUMO1). S900 carries the phosphoserine modification. The residue at position 932 (K932) is an N6-acetyllysine. 2 positions are modified to phosphoserine: S959 and S978. Disordered regions lie at residues 1093–1122 (GPTL…ETQS), 1260–1287 (EMKS…EQDP), 1330–1362 (EKLR…LTSD), and 1378–1410 (QEQL…GTSV). Phosphoserine occurs at positions 1276 and 1277. Composition is skewed to basic and acidic residues over residues 1347–1360 (SQLK…KKLT) and 1381–1403 (LARE…DGSS).

Its subcellular location is the endoplasmic reticulum membrane. Acts as a ribosome receptor and mediates interaction between the ribosome and the endoplasmic reticulum membrane. The polypeptide is Ribosome-binding protein 1 (RRBP1) (Homo sapiens (Human)).